The sequence spans 191 residues: Protein Ves (191 aa).

It belongs to the Ves family.

This is Protein Ves from Escherichia coli (strain SMS-3-5 / SECEC).